Here is a 104-residue protein sequence, read N- to C-terminus: Iron-sulfur cluster assembly protein CyaY (104 aa).

This sequence belongs to the frataxin family.

Its function is as follows. Involved in iron-sulfur (Fe-S) cluster assembly. May act as a regulator of Fe-S biogenesis. This chain is Iron-sulfur cluster assembly protein CyaY, found in Tolumonas auensis (strain DSM 9187 / NBRC 110442 / TA 4).